A 95-amino-acid chain; its full sequence is Small ribosomal subunit protein bS6 (95 aa).

This sequence belongs to the bacterial ribosomal protein bS6 family. Part of the 30S ribosomal subunit.

In terms of biological role, binds together with bS18 to 16S ribosomal RNA. This Bacillus subtilis (strain 168) protein is Small ribosomal subunit protein bS6 (rpsF).